A 211-amino-acid polypeptide reads, in one-letter code: High frequency lysogenization protein HflD homolog (211 aa).

Belongs to the HflD family.

The protein localises to the cytoplasm. It is found in the cell membrane. This is High frequency lysogenization protein HflD homolog from Buchnera aphidicola subsp. Acyrthosiphon pisum (strain 5A).